The primary structure comprises 569 residues: Urease subunit alpha (569 aa).

Residues 131 to 569 (GGIDTHIHFI…LPLAQRYLLL (439 aa)) form the Urease domain. Ni(2+)-binding residues include His-136, His-138, and Lys-219. Lys-219 carries the post-translational modification N6-carboxylysine. Residue His-221 participates in substrate binding. Residues His-248 and His-274 each coordinate Ni(2+). His-322 functions as the Proton donor in the catalytic mechanism. Residue Asp-362 participates in Ni(2+) binding.

This sequence belongs to the metallo-dependent hydrolases superfamily. Urease alpha subunit family. In terms of assembly, heterotrimer of UreA (gamma), UreB (beta) and UreC (alpha) subunits. Three heterotrimers associate to form the active enzyme. Requires Ni cation as cofactor. Post-translationally, carboxylation allows a single lysine to coordinate two nickel ions.

The protein resides in the cytoplasm. It catalyses the reaction urea + 2 H2O + H(+) = hydrogencarbonate + 2 NH4(+). It functions in the pathway nitrogen metabolism; urea degradation; CO(2) and NH(3) from urea (urease route): step 1/1. The chain is Urease subunit alpha from Synechococcus sp. (strain WH7805).